The following is a 2025-amino-acid chain: E3 ubiquitin-protein ligase TRIP12 (2025 aa).

The span at 1–10 shows a compositional bias: polar residues; sequence MSNRPNNNPG. The tract at residues 1–404 is disordered; the sequence is MSNRPNNNPG…SGESESDDSE (404 aa). At S2 the chain carries N-acetylserine. The residue at position 12 (S12) is a Phosphoserine. The segment covering 18-27 has biased composition (polar residues); sequence RNTAGAQPQD. The segment covering 48-70 has biased composition (basic and acidic residues); the sequence is DPDRANTSERQKTGQVPKKDNSR. A phosphoserine mark is found at S77, S85, and S100. Polar residues-rich tracts occupy residues 78 to 88, 99 to 108, and 119 to 132; these read PDYNRTNSPSS, ESLSETNKPP, and EQQL…STSK. 2 stretches are compositionally biased toward low complexity: residues 154–166 and 175–216; these read SSCV…SEST and PTKL…SSTV. K181 bears the N6-acetyllysine mark. Polar residues predominate over residues 280–290; the sequence is PGSSKSETSKP. S310 and S312 each carry phosphoserine. A compositionally biased stretch (polar residues) spans 326 to 338; it reads QKTTGSCASTSRR. The segment covering 346 to 358 has biased composition (basic and acidic residues); it reads GAAEARRQEKMAD. Over residues 362 to 371 the composition is skewed to polar residues; that stretch reads NQETVNSSAA. A compositionally biased stretch (low complexity) spans 379 to 397; the sequence is GAAASSSVAGAVGMTTSGE. Residues 755 to 869 form the WWE domain; the sequence is MLKKGNAQNT…DPELAKSFIK (115 aa). The tract at residues 970 to 1077 is disordered; the sequence is ESLLTSPPKA…QSPKSSFLAS (108 aa). S975 is subject to Phosphoserine. A compositionally biased stretch (low complexity) spans 983–1006; it reads GSGSLGSTTPASSGTATAATNASA. Phosphoserine is present on residues S1024 and S1030. Positions 1034 to 1047 are enriched in basic residues; the sequence is KRKRLPKRGPRRPK. S1049 bears the Phosphoserine mark. Residues 1050-1059 show a composition bias toward basic and acidic residues; it reads PPRDDDKVDN. A compositionally biased stretch (low complexity) spans 1062 to 1073; the sequence is KSPTTTQSPKSS. Residues S1063, S1350, S1355, S1362, and S1409 each carry the phosphoserine modification. T1410 bears the Phosphothreonine mark. Disordered stretches follow at residues 1440–1466 and 1601–1620; these read SSKD…NAKK and TNPE…PRLD. K1458 is subject to N6-acetyllysine. S1460 carries the post-translational modification Phosphoserine. The interval 1529 to 1603 is K-box; it reads EIIPTSEFIN…AMQRLLDTNP (75 aa). One can recognise an HECT domain in the interval 1918 to 2025; the sequence is PDHGYTHDSR…REGQQSFHLS (108 aa). Residue C1992 is the Glycyl thioester intermediate of the active site.

The protein belongs to the UPL family. K-HECT subfamily. As to quaternary structure, interacts with MYC; leading to disrupt interaction with isoform p19ARF/ARF of CDKN2A. Interacts with TRADD; leading to disrupt interaction with isoform p19ARF/ARF of CDKN2A. Interacts with SMARCC1; leading to disrupt interaction with SMARCE1.

It localises to the nucleus. It is found in the nucleoplasm. It catalyses the reaction S-ubiquitinyl-[E2 ubiquitin-conjugating enzyme]-L-cysteine + [acceptor protein]-L-lysine = [E2 ubiquitin-conjugating enzyme]-L-cysteine + N(6)-ubiquitinyl-[acceptor protein]-L-lysine.. It participates in protein modification; protein ubiquitination. E3 ubiquitin-protein ligase involved in ubiquitin fusion degradation (UFD) pathway and regulation of DNA repair. Part of the ubiquitin fusion degradation (UFD) pathway, a process that mediates ubiquitination of protein at their N-terminus, regardless of the presence of lysine residues in target proteins. Acts as a key regulator of DNA damage response by acting as a suppressor of RNF168, an E3 ubiquitin-protein ligase that promotes accumulation of 'Lys-63'-linked histone H2A and H2AX at DNA damage sites, thereby acting as a guard against excessive spreading of ubiquitinated chromatin at damaged chromosomes. In normal cells, mediates ubiquitination and degradation of isoform p19ARF/ARF of CDKN2A, a lysine-less tumor suppressor required for p53/TP53 activation under oncogenic stress. In cancer cells, however, isoform p19ARF/ARF and TRIP12 are located in different cell compartments, preventing isoform p19ARF/ARF ubiquitination and degradation. Does not mediate ubiquitination of isoform p16-INK4a of CDKN2A. Also catalyzes ubiquitination of NAE1 and SMARCE1, leading to their degradation. Ubiquitination and degradation of target proteins is regulated by interaction with proteins such as MYC, TRADD or SMARCC1, which disrupt the interaction between TRIP12 and target proteins. Mediates ubiquitination of ASXL1: following binding to N(6)-methyladenosine methylated DNA, ASXL1 is ubiquitinated by TRIP12, leading to its degradation and subsequent inactivation of the PR-DUB complex. The polypeptide is E3 ubiquitin-protein ligase TRIP12 (Trip12) (Rattus norvegicus (Rat)).